Reading from the N-terminus, the 124-residue chain is Large ribosomal subunit protein bL12 (124 aa).

Belongs to the bacterial ribosomal protein bL12 family. As to quaternary structure, homodimer. Part of the ribosomal stalk of the 50S ribosomal subunit. Forms a multimeric L10(L12)X complex, where L10 forms an elongated spine to which 2 to 4 L12 dimers bind in a sequential fashion. Binds GTP-bound translation factors.

Forms part of the ribosomal stalk which helps the ribosome interact with GTP-bound translation factors. Is thus essential for accurate translation. This chain is Large ribosomal subunit protein bL12, found in Cereibacter sphaeroides (strain ATCC 17025 / ATH 2.4.3) (Rhodobacter sphaeroides).